A 290-amino-acid polypeptide reads, in one-letter code: Sodium/potassium-transporting ATPase subunit beta-2 (290 aa).

Over 1–39 the chain is Cytoplasmic; sequence MVIQKEKKSCGQVVEEWKEFVWNPRTHQFMGRTGTSWAF. A helical; Signal-anchor for type II membrane protein transmembrane segment spans residues 40-67; the sequence is ILLFYLVFYGFLTAMFTLTMWVMLQTVS. Residues 68 to 290 are Extracellular-facing; sequence DHTPKYQDRL…VAFKLRINKA (223 aa). Residues asparagine 96 and asparagine 118 are each glycosylated (N-linked (GlcNAc...) asparagine). A disulfide bridge links cysteine 129 with cysteine 150. N-linked (GlcNAc...) asparagine glycosylation is found at asparagine 153 and asparagine 159. A disulfide bond links cysteine 160 and cysteine 177. Residues asparagine 193, asparagine 197, and asparagine 238 are each glycosylated (N-linked (GlcNAc...) asparagine). The interval 193-290 is immunoglobulin-like; that stretch reads NQSMNVTCVG…VAFKLRINKA (98 aa). A disulfide bridge connects residues cysteine 200 and cysteine 261.

Belongs to the X(+)/potassium ATPases subunit beta family. As to quaternary structure, the sodium/potassium-transporting ATPase is composed of a catalytic alpha subunit, an auxiliary non-catalytic beta subunit and an additional regulatory subunit. Interacts with isoform 2 of BSG. Highly expressed in brain (at protein level).

It is found in the cell membrane. This is the non-catalytic component of the active enzyme, which catalyzes the hydrolysis of ATP coupled with the exchange of Na(+) and K(+) ions across the plasma membrane. The exact function of the beta-2 subunit is not known. In terms of biological role, mediates cell adhesion of neurons and astrocytes, and promotes neurite outgrowth. This Rattus norvegicus (Rat) protein is Sodium/potassium-transporting ATPase subunit beta-2 (Atp1b2).